The primary structure comprises 150 residues: 3-hydroxyacyl-[acyl-carrier-protein] dehydratase FabZ (150 aa).

Residue histidine 52 is part of the active site.

It belongs to the thioester dehydratase family. FabZ subfamily.

The protein resides in the cytoplasm. The catalysed reaction is a (3R)-hydroxyacyl-[ACP] = a (2E)-enoyl-[ACP] + H2O. Functionally, involved in unsaturated fatty acids biosynthesis. Catalyzes the dehydration of short chain beta-hydroxyacyl-ACPs and long chain saturated and unsaturated beta-hydroxyacyl-ACPs. This chain is 3-hydroxyacyl-[acyl-carrier-protein] dehydratase FabZ, found in Cupriavidus metallidurans (strain ATCC 43123 / DSM 2839 / NBRC 102507 / CH34) (Ralstonia metallidurans).